Here is a 241-residue protein sequence, read N- to C-terminus: Small ribosomal subunit protein bS6 (241 aa).

Residues 97–108 show a composition bias toward basic residues; the sequence is KPKIRERNRKYT. The disordered stretch occupies residues 97 to 241; the sequence is KPKIRERNRK…YNNKKPQSSN (145 aa). Residues 109–118 are compositionally biased toward basic and acidic residues; sequence PRRDRFEKPN. 2 stretches are compositionally biased toward low complexity: residues 130–151 and 161–182; these read QDQQ…QTSQ and DDFQ…NQSG. Residues 189–202 are compositionally biased toward polar residues; it reads RQNQENIHQNSKNH.

It belongs to the bacterial ribosomal protein bS6 family.

Functionally, binds together with bS18 to 16S ribosomal RNA. The sequence is that of Small ribosomal subunit protein bS6 from Mesomycoplasma hyopneumoniae (strain 232) (Mycoplasma hyopneumoniae).